A 387-amino-acid polypeptide reads, in one-letter code: SLC2A4 regulator (387 aa).

Disordered regions lie at residues 1-97 and 139-179; these read MERP…RATP and EALV…PPEA. The segment covering 27-36 has biased composition (low complexity); that stretch reads GPGPRAAPVT. The C2H2-type zinc finger occupies 200-225; the sequence is FQCLWKSCGKVLSTASAMQRHIRLVH. The Nuclear export signal signature appears at 253–263; sequence LTDGLSSLTPV. 2 positions are modified to phosphoserine: Ser264 and Ser268. A disordered region spans residues 283–305; that stretch reads EPPALPSPLRPPAPPLPPPPVLS. Pro residues predominate over residues 285–303; the sequence is PALPSPLRPPAPPLPPPPV. Residues 351-354 carry the Nuclear localization signal motif; sequence RKPR.

As to quaternary structure, interacts with MEF2A. As to expression, according to PubMed:14630949, expressed in heart, skeletal muscle, liver, kidney and pancreas; undetectable in lung, placenta or brain. According to PubMed:14625278, ubiquitously expressed, with lowest expression in brain and ileum.

The protein localises to the cytoplasm. The protein resides in the nucleus. Transcription factor involved in SLC2A4 and HD gene transactivation. Binds to the consensus sequence 5'-GCCGGCG-3'. The sequence is that of SLC2A4 regulator (SLC2A4RG) from Homo sapiens (Human).